Consider the following 163-residue polypeptide: Carbon monoxide dehydrogenase small chain (163 aa).

One can recognise a 2Fe-2S ferredoxin-type domain in the interval 4 to 80 (KIITVNVNGK…GSEVLTVEGL (77 aa)). [2Fe-2S] cluster is bound by residues cysteine 42, cysteine 47, cysteine 50, cysteine 62, cysteine 101, cysteine 104, cysteine 136, and cysteine 138.

In terms of assembly, dimer of heterotrimers. Each heterotrimer consists of a large, a medium and a small subunit. [2Fe-2S] cluster is required as a cofactor.

The enzyme catalyses CO + a quinone + H2O = a quinol + CO2. Catalyzes the oxidation of carbon monoxide to carbon dioxide. This Hydrogenophaga pseudoflava (Pseudomonas carboxydoflava) protein is Carbon monoxide dehydrogenase small chain (cutS).